A 962-amino-acid polypeptide reads, in one-letter code: Glycine dehydrogenase (decarboxylating) (962 aa).

At K709 the chain carries N6-(pyridoxal phosphate)lysine.

This sequence belongs to the GcvP family. The glycine cleavage system is composed of four proteins: P, T, L and H. It depends on pyridoxal 5'-phosphate as a cofactor.

The catalysed reaction is N(6)-[(R)-lipoyl]-L-lysyl-[glycine-cleavage complex H protein] + glycine + H(+) = N(6)-[(R)-S(8)-aminomethyldihydrolipoyl]-L-lysyl-[glycine-cleavage complex H protein] + CO2. The glycine cleavage system catalyzes the degradation of glycine. The P protein binds the alpha-amino group of glycine through its pyridoxal phosphate cofactor; CO(2) is released and the remaining methylamine moiety is then transferred to the lipoamide cofactor of the H protein. The chain is Glycine dehydrogenase (decarboxylating) from Shewanella baltica (strain OS195).